We begin with the raw amino-acid sequence, 306 residues long: Acetylglutamate kinase (306 aa).

Residues 79 to 80, arginine 101, and asparagine 203 contribute to the substrate site; that span reads GG.

The protein belongs to the acetylglutamate kinase family. ArgB subfamily.

The protein localises to the cytoplasm. It catalyses the reaction N-acetyl-L-glutamate + ATP = N-acetyl-L-glutamyl 5-phosphate + ADP. It functions in the pathway amino-acid biosynthesis; L-arginine biosynthesis; N(2)-acetyl-L-ornithine from L-glutamate: step 2/4. In terms of biological role, catalyzes the ATP-dependent phosphorylation of N-acetyl-L-glutamate. In Polaromonas naphthalenivorans (strain CJ2), this protein is Acetylglutamate kinase.